A 624-amino-acid chain; its full sequence is (-)-beta-phellandrene synthase 1, chloroplastic (624 aa).

The transit peptide at 1 to 48 (MAIVSSVPLASKSCLHKSLISSIHKLKPFCRTIPTLGMSRPGKYVMPS) directs the protein to the chloroplast. Residues D375, D379, and D527 each contribute to the Mg(2+) site. Positions 375 to 379 (DDMYD) match the DDXXD motif motif.

This sequence belongs to the terpene synthase family. Tpsd subfamily. The cofactor is Mg(2+). Mn(2+) serves as cofactor.

Its subcellular location is the plastid. It is found in the chloroplast. It catalyses the reaction (2E)-geranyl diphosphate = (-)-beta-phellandrene + diphosphate. Its pathway is terpene metabolism; oleoresin biosynthesis. In terms of biological role, terpene synthase (TPS) involved in the biosynthesis of monoterpene natural products included in conifer oleoresin secretions and volatile emissions; these compounds contribute to biotic and abiotic stress defense against herbivores and pathogens. Catalyzes the conversion of (2E)-geranyl diphosphate (GPP) to (-)-beta-phellandrene. The polypeptide is (-)-beta-phellandrene synthase 1, chloroplastic (Picea sitchensis (Sitka spruce)).